Here is a 249-residue protein sequence, read N- to C-terminus: DNA polymerase sliding clamp (249 aa).

Belongs to the PCNA family. The subunits circularize to form a toroid; DNA passes through its center. Replication factor C (RFC) is required to load the toroid on the DNA. Homotrimer. Interacts with NucS.

In terms of biological role, sliding clamp subunit that acts as a moving platform for DNA processing. Responsible for tethering the catalytic subunit of DNA polymerase and other proteins to DNA during high-speed replication. Regulates activity of NucS endonuclease and prevents non-specific cleavage. This chain is DNA polymerase sliding clamp, found in Pyrococcus abyssi (strain GE5 / Orsay).